A 130-amino-acid chain; its full sequence is Large ribosomal subunit protein bL19 (130 aa).

The protein belongs to the bacterial ribosomal protein bL19 family.

In terms of biological role, this protein is located at the 30S-50S ribosomal subunit interface and may play a role in the structure and function of the aminoacyl-tRNA binding site. The polypeptide is Large ribosomal subunit protein bL19 (Parvibaculum lavamentivorans (strain DS-1 / DSM 13023 / NCIMB 13966)).